A 72-amino-acid chain; its full sequence is Candidate secreted effector protein MPL124499 (72 aa).

Positions 1 to 21 are cleaved as a signal peptide; sequence MKLSIFAAIFMAFVSLNQVFG.

The protein belongs to the CPGH1 family.

The protein resides in the secreted. The protein localises to the host cell. It is found in the host cytoplasm. Its subcellular location is the host nucleus. In terms of biological role, rust effector delivered into infected tissues to modulate host functions and contribute to pathogen virulence. Enhances leaf colonization by the bacteria Pseudomonas syringae and the oomycete Hyaloperonospora arabidopsidis pathogens in an Arabidopsis thaliana infection model. This chain is Candidate secreted effector protein MPL124499, found in Melampsora larici-populina (strain 98AG31 / pathotype 3-4-7) (Poplar leaf rust fungus).